The chain runs to 226 residues: Large ribosomal subunit protein uL1 (226 aa).

The protein belongs to the universal ribosomal protein uL1 family. In terms of assembly, part of the 50S ribosomal subunit.

In terms of biological role, binds directly to 23S rRNA. The L1 stalk is quite mobile in the ribosome, and is involved in E site tRNA release. Functionally, protein L1 is also a translational repressor protein, it controls the translation of the L11 operon by binding to its mRNA. This chain is Large ribosomal subunit protein uL1, found in Mycoplasma genitalium (strain ATCC 33530 / DSM 19775 / NCTC 10195 / G37) (Mycoplasmoides genitalium).